A 545-amino-acid polypeptide reads, in one-letter code: Mesoderm induction early response protein 2 (545 aa).

Position 11 is a phosphoserine (serine 11). The interval 100 to 189 (DPISDRESEG…SSDTEEDSLP (90 aa)) is disordered. Polar residues predominate over residues 140 to 153 (QSSADDLTPSVTSH). An ELM2 domain is found at 195-292 (KEIMVGPQFQ…EALRRLRFNV (98 aa)). Residues 297-349 (DGLCAWSEEECRNFEHGFRVHGKNFHLIQANKVRTRSVGECVEYYYLWKKSER) form the SANT domain. Positions 364 to 464 (YVPSGTTDAD…YQPAVTAPEP (101 aa)) are disordered.

In terms of assembly, part of a complex containing at least CDYL, MIER1, MIER2, HDAC1 and HDAC2.

It is found in the nucleus. Its function is as follows. Transcriptional repressor. The polypeptide is Mesoderm induction early response protein 2 (MIER2) (Homo sapiens (Human)).